The following is a 117-amino-acid chain: Ig heavy chain V region G4 (117 aa).

Positions 1–19 (MTHWLCFTLALVAVRGVLS) are cleaved as a signal peptide. Residues 20-49 (EIQLVESGGAIRKPGDSLRLSCKASGFTFS) are framework-1. Cys41 and Cys115 form a disulfide bridge. The complementarity-determining-1 stretch occupies residues 50 to 54 (DTWMA). Residues 55 to 68 (WARQPPGKGLQWVG) form a framework-2 region. A complementarity-determining-2 region spans residues 69-85 (EINGNSETIRYAPEVKG). Positions 86-117 (RLTISRDNTQNLLFLQISSLKPEDTATYYCAR) are framework-3.

This Caiman crocodilus (Spectacled caiman) protein is Ig heavy chain V region G4 (G4).